The primary structure comprises 183 residues: Beta-defensin 129 (183 aa).

An N-terminal signal peptide occupies residues 1-19 (MKLLFPIFASLMLQYQVNT). 3 disulfides stabilise this stretch: Cys27-Cys53, Cys34-Cys48, and Cys38-Cys54. A disordered region spans residues 141–183 (TATSTKSNTKESRDSATASPPPAPPPPNILPTPSLELEEAEEQ). Pro residues predominate over residues 159–170 (SPPPAPPPPNIL).

It belongs to the beta-defensin family.

It localises to the secreted. Its function is as follows. Has antibacterial activity. The chain is Beta-defensin 129 (DEFB129) from Pan troglodytes (Chimpanzee).